The primary structure comprises 1070 residues: Duffy receptor (1070 aa).

The first 20 residues, 1 to 20 (MKGKNRSLFVLLVLLLLHKV), serve as a signal peptide directing secretion. The Extracellular portion of the chain corresponds to 21 to 1007 (NNVLLERTIE…CFTKGGFKDK (987 aa)). The disordered stretch occupies residues 116–146 (YMEGKDGGDKTGEEKDGEHKTDSKTDNGKGA). The span at 118-142 (EGKDGGDKTGEEKDGEHKTDSKTDN) shows a compositional bias: basic and acidic residues. Asparagine 183 carries N-linked (GlcNAc...) asparagine glycosylation. A pvRII region; mediates ACKR1 binding region spans residues 211–521 (NTVMKNCNYK…AKKNTQEVVT (311 aa)). Disulfide bonds link cysteine 217-cysteine 246 and cysteine 230-cysteine 237. Asparagine 255, asparagine 351, and asparagine 420 each carry an N-linked (GlcNAc...) asparagine glycan. 4 disulfide bridges follow: cysteine 300–cysteine 377, cysteine 415–cysteine 432, cysteine 427–cysteine 507, and cysteine 436–cysteine 505. Composition is skewed to polar residues over residues 525–542 (NAAK…QPVD), 554–569 (THGN…TTGK), and 629–642 (GASN…TVEA). Residues 525-906 (NAAKSQATNS…HLNSNNNLSN (382 aa)) form a disordered region. Residues 697 to 711 (ETGKGQDNDMAKATK) are compositionally biased toward basic and acidic residues. A compositionally biased stretch (low complexity) spans 712–728 (DSSNSSDGTSSATGDTT). Residue asparagine 715 is glycosylated (N-linked (GlcNAc...) asparagine). Over residues 730-748 (AVDREINKGVPEDRDKTVG) the composition is skewed to basic and acidic residues. The N-linked (GlcNAc...) asparagine glycan is linked to asparagine 787. Positions 808-817 (LSKTESLEST) are enriched in low complexity. The N-linked (GlcNAc...) asparagine glycan is linked to asparagine 825. 2 stretches are compositionally biased toward basic and acidic residues: residues 835–849 (NGGK…DFKS) and 865–889 (AEGH…KDTF). The segment covering 895-906 (SHHLNSNNNLSN) has biased composition (low complexity). 2 N-linked (GlcNAc...) asparagine glycosylation sites follow: asparagine 903 and asparagine 938. Residues 1008–1025 (TYFAAAGALLILLLLIAS) form a helical membrane-spanning segment. Over 1026 to 1070 (RKMIKNDSEEATFNEFEEYCDNIHRIPLMPNNIEHMQPSTPLDYS) the chain is Cytoplasmic.

As to quaternary structure, homodimer; dimerization (via PvRII region) is promoted by the interaction with human ACKR1. Interacts (via PvRII region) with human ACKR1 (via N-terminal extracellular domain).

The protein localises to the membrane. Its function is as follows. Binds to the human erythrocyte Duffy blood group determinant (ACKR1). This Plasmodium vivax (strain Salvador I) protein is Duffy receptor (PVDR).